The chain runs to 366 residues: Peptide chain release factor 2 (366 aa).

The residue at position 251 (Q251) is an N5-methylglutamine.

It belongs to the prokaryotic/mitochondrial release factor family. Post-translationally, methylated by PrmC. Methylation increases the termination efficiency of RF2.

Its subcellular location is the cytoplasm. Peptide chain release factor 2 directs the termination of translation in response to the peptide chain termination codons UGA and UAA. The sequence is that of Peptide chain release factor 2 from Campylobacter concisus (strain 13826).